The chain runs to 551 residues: Nose resistant to fluoxetine protein 5 (551 aa).

Residues Met-1–Ser-20 form the signal peptide. A disulfide bridge connects residues Cys-151 and Cys-232. The disordered stretch occupies residues Glu-241 to Leu-265.

It belongs to the BPI/LBP/Plunc superfamily. BPI/LBP family. As to quaternary structure, interacts with ttr-52. In terms of tissue distribution, expressed in the body wall muscle cells and detected at the basal surface of pharyngeal cells and basal-lateral membranes of the intestine.

It localises to the secreted. Its function is as follows. Plays a role in the uptake of a range of molecules including phosphatidylserine, lipids and xenobiotic compounds from the intestine to surrounding tissues. Possesses lipid transfer activity. Mediates transport of lipids from intestine to reproductive tract. Binds phosphatidylserine. Plays a role in efficient clearance of cell corpses by mediating phosphatidylserine appearance on phagocytic cells, thus promoting phagocytic engulfment of apoptotic cells. Vital for embryonic development. In Caenorhabditis elegans, this protein is Nose resistant to fluoxetine protein 5.